The primary structure comprises 82 residues: Large ribosomal subunit protein bL27 (82 aa).

The disordered stretch occupies residues 1–21; the sequence is MAHKKGASSSRNGRDSNAKRL.

Belongs to the bacterial ribosomal protein bL27 family.

The sequence is that of Large ribosomal subunit protein bL27 from Tropheryma whipplei (strain TW08/27) (Whipple's bacillus).